We begin with the raw amino-acid sequence, 392 residues long: Stilbene synthase 1 (392 aa).

55–58 (KFNR) provides a ligand contact to substrate. Cysteine 164 is an active-site residue. Substrate is bound by residues leucine 267 and 305–307 (GGP).

This sequence belongs to the thiolase-like superfamily. Chalcone/stilbene synthases family. In terms of assembly, homodimer. As to expression, in leaves, expressed in palisade and spongy parenchyma cells and, to a lesser extent, in epidermal cells after induction.

Its subcellular location is the cytoplasm. It catalyses the reaction 4-coumaroyl-CoA + 3 malonyl-CoA + 3 H(+) = trans-resveratrol + 4 CO2 + 4 CoA. It functions in the pathway phytoalexin biosynthesis; 3,4',5-trihydroxystilbene biosynthesis; 3,4',5-trihydroxystilbene from trans-4-coumarate: step 2/2. Mediates resistance to pathogens which are sensitive to stilbenes such as Botrytis cinerea, Eutypa lata and Plasmopora viticola by enhancing the production of phytoalexins. Confers resistance to Phytophthora palmivora when expressed in papaya. The sequence is that of Stilbene synthase 1 (VINST1) from Vitis vinifera (Grape).